The primary structure comprises 126 residues: Phosphoribosyl-AMP cyclohydrolase (126 aa).

A Mg(2+)-binding site is contributed by Asp73. Cys74 lines the Zn(2+) pocket. Mg(2+) is bound by residues Asp75 and Asp77. The Zn(2+) site is built by Cys91 and Cys98.

Belongs to the PRA-CH family. As to quaternary structure, homodimer. It depends on Mg(2+) as a cofactor. Requires Zn(2+) as cofactor.

The protein localises to the cytoplasm. The catalysed reaction is 1-(5-phospho-beta-D-ribosyl)-5'-AMP + H2O = 1-(5-phospho-beta-D-ribosyl)-5-[(5-phospho-beta-D-ribosylamino)methylideneamino]imidazole-4-carboxamide. The protein operates within amino-acid biosynthesis; L-histidine biosynthesis; L-histidine from 5-phospho-alpha-D-ribose 1-diphosphate: step 3/9. Catalyzes the hydrolysis of the adenine ring of phosphoribosyl-AMP. The polypeptide is Phosphoribosyl-AMP cyclohydrolase (Solibacter usitatus (strain Ellin6076)).